We begin with the raw amino-acid sequence, 494 residues long: Glutamyl-tRNA(Gln) amidotransferase subunit A, mitochondrial (494 aa).

Active-site charge relay system residues include Lys79 and Ser160. The active-site Acyl-ester intermediate is the Ser184.

This sequence belongs to the amidase family. GatA subfamily. As to quaternary structure, subunit of the heterotrimeric GatCAB amidotransferase (AdT) complex, composed of A, B and C subunits.

The protein resides in the mitochondrion. The catalysed reaction is L-glutamyl-tRNA(Gln) + L-glutamine + ATP + H2O = L-glutaminyl-tRNA(Gln) + L-glutamate + ADP + phosphate + H(+). Allows the formation of correctly charged Gln-tRNA(Gln) through the transamidation of misacylated Glu-tRNA(Gln) in the mitochondria. The reaction takes place in the presence of glutamine and ATP through an activated gamma-phospho-Glu-tRNA(Gln). The chain is Glutamyl-tRNA(Gln) amidotransferase subunit A, mitochondrial from Aedes aegypti (Yellowfever mosquito).